The following is a 125-amino-acid chain: Glycine cleavage system H protein 1 (125 aa).

Residues 22-103 form the Lipoyl-binding domain; that stretch reads KAYIGITDYA…PYGSWLVAVR (82 aa). Lysine 63 carries the post-translational modification N6-lipoyllysine.

It belongs to the GcvH family. As to quaternary structure, the glycine cleavage system is composed of four proteins: P, T, L and H. (R)-lipoate is required as a cofactor.

In terms of biological role, the glycine cleavage system catalyzes the degradation of glycine. The H protein shuttles the methylamine group of glycine from the P protein to the T protein. In Caldanaerobacter subterraneus subsp. tengcongensis (strain DSM 15242 / JCM 11007 / NBRC 100824 / MB4) (Thermoanaerobacter tengcongensis), this protein is Glycine cleavage system H protein 1.